We begin with the raw amino-acid sequence, 663 residues long: Chaperone protein HtpG (663 aa).

Residues 1 to 352 (MTKQTLSFQA…SADLPLNVSR (352 aa)) are a; substrate-binding. The span at 218–228 (ELINPSDEKGG) shows a compositional bias: basic and acidic residues. The segment at 218–237 (ELINPSDEKGGRQPGGMVKT) is disordered. The tract at residues 353–595 (ELLQESRDVK…DHGMSTQLAR (243 aa)) is b. Residues 596-663 (MLKQAGQAAP…YVKRVNALLV (68 aa)) are c.

This sequence belongs to the heat shock protein 90 family. In terms of assembly, homodimer.

The protein resides in the cytoplasm. Functionally, molecular chaperone. Has ATPase activity. This chain is Chaperone protein HtpG, found in Albidiferax ferrireducens (strain ATCC BAA-621 / DSM 15236 / T118) (Rhodoferax ferrireducens).